The primary structure comprises 718 residues: Centromere/kinetochore protein zw10 (718 aa).

The protein belongs to the ZW10 family.

Its subcellular location is the cytoplasm. It is found in the nucleus. The protein resides in the chromosome. The protein localises to the centromere. It localises to the kinetochore. Functionally, required for accurate chromosome segregation. The chain is Centromere/kinetochore protein zw10 (mit(1)15) from Drosophila pseudoobscura pseudoobscura (Fruit fly).